The following is a 307-amino-acid chain: Cyclin-dependent kinase 5 activator 1 (307 aa).

A lipid anchor (N-myristoyl glycine) is attached at Gly2. Ser8 carries the post-translational modification Phosphoserine; by CDK5. The segment at 97–136 (TFAQPPPAQPPAPPASQLSGSQTGGSSSVKKAPHPAVTSA) is disordered. Over residues 100–110 (QPPPAQPPAPP) the composition is skewed to pro residues. Over residues 111–124 (ASQLSGSQTGGSSS) the composition is skewed to low complexity. At Thr138 the chain carries Phosphothreonine; by CDK5.

The protein belongs to the cyclin-dependent kinase 5 activator family. As to quaternary structure, heterodimer composed of a catalytic subunit CDK5 and a regulatory subunit CDK5R1 (p25) and macromolecular complex composed of at least CDK5, CDK5R1 (p35) and CDK5RAP1 or CDK5RAP2 or CDK5RAP3. Only the heterodimer shows kinase activity. Interacts with EPHA4 and NGEF; may mediate the activation of NGEF by EPHA4. Interacts with RASGRF2. The complex p35/CDK5 interacts with CLOCK. Post-translationally, the p35 form is proteolytically cleaved by calpain, giving rise to the p25 form. P35 has a 5 to 10 fold shorter half-life compared to p25. The conversion results in deregulation of the CDK5 kinase: p25/CDK5 kinase displays an increased and altered tau phosphorylation in comparison to the p35/CDK5 kinase in vivo. In terms of processing, myristoylated. A proper myristoylation signal is essential for the proper distribution of p35. Ubiquitinated, leading to its degradation: degradation of p35 by proteasome results in down-regulation of CDK5 activity. During this process, CDK5 phosphorylates p35 and induces its ubiquitination and subsequent degradation. Ubiquitinated by the CRL2(FEM1B) complex, which recognizes the -Gly-Leu-Asp-Arg C-degron at the C-terminus, leading to its degradation. Post-translationally, phosphorylation at Ser-8 and Thr-138 by CDK5 prevents calpain-mediated proteolysis. As to expression, brain and neuron specific.

It is found in the cell membrane. The protein localises to the cell projection. It localises to the neuron projection. Its subcellular location is the nucleus. The protein resides in the cytoplasm. It is found in the perinuclear region. The protein localises to the perikaryon. In terms of biological role, p35 is a neuron specific activator of CDK5. The complex p35/CDK5 is required for neurite outgrowth and cortical lamination. Involved in dendritic spine morphogenesis by mediating the EFNA1-EPHA4 signaling. Activator of TPKII. The complex p35/CDK5 participates in the regulation of the circadian clock by modulating the function of CLOCK protein: phosphorylates CLOCK at 'Thr-451' and 'Thr-461' and regulates the transcriptional activity of the CLOCK-BMAL1 heterodimer in association with altered stability and subcellular distribution. The chain is Cyclin-dependent kinase 5 activator 1 (CDK5R1) from Homo sapiens (Human).